We begin with the raw amino-acid sequence, 456 residues long: Exodeoxyribonuclease 7 large subunit (456 aa).

This sequence belongs to the XseA family. In terms of assembly, heterooligomer composed of large and small subunits.

Its subcellular location is the cytoplasm. It carries out the reaction Exonucleolytic cleavage in either 5'- to 3'- or 3'- to 5'-direction to yield nucleoside 5'-phosphates.. In terms of biological role, bidirectionally degrades single-stranded DNA into large acid-insoluble oligonucleotides, which are then degraded further into small acid-soluble oligonucleotides. The protein is Exodeoxyribonuclease 7 large subunit of Erwinia tasmaniensis (strain DSM 17950 / CFBP 7177 / CIP 109463 / NCPPB 4357 / Et1/99).